Consider the following 302-residue polypeptide: Protoheme IX farnesyltransferase (302 aa).

Helical transmembrane passes span 28 to 48 (LALL…SLDP), 50 to 70 (MLAL…AFNM), 93 to 115 (LNPY…SAAA), 119 to 138 (YVAL…YTQL), 147 to 167 (IIFG…AAAG), 172 to 192 (GGVL…WFLG), 219 to 239 (LIAV…LYYG), 242 to 262 (FLTA…IGGF), and 271 to 291 (ALKL…ILPL).

This sequence belongs to the UbiA prenyltransferase family. Protoheme IX farnesyltransferase subfamily.

It localises to the cell membrane. The enzyme catalyses heme b + (2E,6E)-farnesyl diphosphate + H2O = Fe(II)-heme o + diphosphate. It participates in porphyrin-containing compound metabolism; heme O biosynthesis; heme O from protoheme: step 1/1. Converts heme B (protoheme IX) to heme O by substitution of the vinyl group on carbon 2 of heme B porphyrin ring with a hydroxyethyl farnesyl side group. This chain is Protoheme IX farnesyltransferase, found in Aeropyrum pernix (strain ATCC 700893 / DSM 11879 / JCM 9820 / NBRC 100138 / K1).